A 117-amino-acid polypeptide reads, in one-letter code: Large ribosomal subunit protein eL22 (117 aa).

Ser49 and Ser50 each carry phosphoserine.

The protein belongs to the eukaryotic ribosomal protein eL22 family. In terms of assembly, component of the large ribosomal subunit (LSU). Mature yeast ribosomes consist of a small (40S) and a large (60S) subunit. The 40S small subunit contains 1 molecule of ribosomal RNA (18S rRNA) and at least 33 different proteins. The large 60S subunit contains 3 rRNA molecules (25S, 5.8S and 5S rRNA) and at least 46 different proteins.

It localises to the cytoplasm. Its subcellular location is the nucleus. The protein localises to the nucleolus. Functionally, component of the ribosome, a large ribonucleoprotein complex responsible for the synthesis of proteins in the cell. The small ribosomal subunit (SSU) binds messenger RNAs (mRNAs) and translates the encoded message by selecting cognate aminoacyl-transfer RNA (tRNA) molecules. The large subunit (LSU) contains the ribosomal catalytic site termed the peptidyl transferase center (PTC), which catalyzes the formation of peptide bonds, thereby polymerizing the amino acids delivered by tRNAs into a polypeptide chain. The nascent polypeptides leave the ribosome through a tunnel in the LSU and interact with protein factors that function in enzymatic processing, targeting, and the membrane insertion of nascent chains at the exit of the ribosomal tunnel. This Schizosaccharomyces pombe (strain 972 / ATCC 24843) (Fission yeast) protein is Large ribosomal subunit protein eL22 (rpl22).